The sequence spans 506 residues: Histidine--tRNA ligase, mitochondrial (506 aa).

The N-terminal 33 residues, 1-33 (MHLLGLLPRRAWASLLSQLLRPPWASCTGAVRC), are a transit peptide targeting the mitochondrion. S67 bears the Phosphoserine mark. Residues 131-133 (DLT), R158, Q174, D178, R327, and 331-332 (YY) contribute to the L-histidine site. K444 carries the post-translational modification N6-acetyllysine.

The protein belongs to the class-II aminoacyl-tRNA synthetase family. As to quaternary structure, homodimer.

The protein localises to the mitochondrion. It carries out the reaction tRNA(His) + L-histidine + ATP = L-histidyl-tRNA(His) + AMP + diphosphate + H(+). Mitochondrial aminoacyl-tRNA synthetase that catalyzes the ATP-dependent ligation of histidine to the 3'-end of its cognate tRNA, via the formation of an aminoacyl-adenylate intermediate (His-AMP). The polypeptide is Histidine--tRNA ligase, mitochondrial (HARS2) (Pongo abelii (Sumatran orangutan)).